Reading from the N-terminus, the 306-residue chain is 33 kDa chaperonin (306 aa).

2 disulfide bridges follow: C242–C244 and C275–C278.

Belongs to the HSP33 family. Under oxidizing conditions two disulfide bonds are formed involving the reactive cysteines. Under reducing conditions zinc is bound to the reactive cysteines and the protein is inactive.

It localises to the cytoplasm. Functionally, redox regulated molecular chaperone. Protects both thermally unfolding and oxidatively damaged proteins from irreversible aggregation. Plays an important role in the bacterial defense system toward oxidative stress. This chain is 33 kDa chaperonin, found in Gloeobacter violaceus (strain ATCC 29082 / PCC 7421).